Reading from the N-terminus, the 245-residue chain is Enolase-phosphatase E1 (245 aa).

Residues aspartate 14 and glutamate 16 each coordinate Mg(2+). Residues 141 to 142 (SS) and lysine 175 each bind substrate. Aspartate 200 is a Mg(2+) binding site.

This sequence belongs to the HAD-like hydrolase superfamily. MasA/MtnC family. Monomer. Mg(2+) is required as a cofactor.

It is found in the cytoplasm. It localises to the nucleus. It catalyses the reaction 5-methylsulfanyl-2,3-dioxopentyl phosphate + H2O = 1,2-dihydroxy-5-(methylsulfanyl)pent-1-en-3-one + phosphate. It participates in amino-acid biosynthesis; L-methionine biosynthesis via salvage pathway; L-methionine from S-methyl-5-thio-alpha-D-ribose 1-phosphate: step 3/6. Its pathway is amino-acid biosynthesis; L-methionine biosynthesis via salvage pathway; L-methionine from S-methyl-5-thio-alpha-D-ribose 1-phosphate: step 4/6. Bifunctional enzyme that catalyzes the enolization of 2,3-diketo-5-methylthiopentyl-1-phosphate (DK-MTP-1-P) into the intermediate 2-hydroxy-3-keto-5-methylthiopentenyl-1-phosphate (HK-MTPenyl-1-P), which is then dephosphorylated to form the acireductone 1,2-dihydroxy-3-keto-5-methylthiopentene (DHK-MTPene). This Drosophila grimshawi (Hawaiian fruit fly) protein is Enolase-phosphatase E1.